Here is a 701-residue protein sequence, read N- to C-terminus: L-glutamate oxidase precursor (701 aa).

Residues 1-14 (MTTDTARRHTGAER) form the signal peptide. FAD contacts are provided by A69, E88, A89, R97, M123, R124, M354, and S409. Positions 481 to 520 (LALPQSVRNLPTGLLGAHPSVDESRIGEEQVEYYRNSELR) are excised as a propeptide. Residues E645, W653, and I654 each coordinate FAD. A propeptide spanning residues 684–701 (RRGAAAATEPMREEALTS) is cleaved from the precursor.

The protein belongs to the flavin monoamine oxidase family. LGOX subfamily. In terms of assembly, the LGOX precursor forms homodimers. The mature enzyme is a heterohexamer composed of 2 alpha chains, 2 beta chains and 2 gamma chains (alpha2beta2gamma2). Requires FAD as cofactor. The precursor form is proteolytically cleaved by an endopeptidase into alpha, beta and gamma chains, which form the stable mature enzyme. Activation by proteolysis occurs after secretion.

The protein resides in the secreted. The enzyme catalyses L-glutamate + O2 + H2O = H2O2 + 2-oxoglutarate + NH4(+). With respect to regulation, produced as a single polypeptide precursor and is activated by proteolytic cleavage. The LGOX precursor is an active enzyme, but it exhibits lower catalytic efficiency and lower thermostability compared with the mature hexameric LGOX. The mature form is strongly inhibited by p-chloromercuribenzoate, but not by CuCl(2), EDTA and diethyldithiocarbamate. Its function is as follows. Catalyzes the oxidative deamination of L-glutamate to 2-ketoglutarate along with the production of ammonia and hydrogen peroxide. Shows strict substrate specificity for L-glutamate, and exhibits only very weak activity with L-aspartate. The chain is L-glutamate oxidase precursor from Streptomyces sp.